The primary structure comprises 376 residues: Histidinol-phosphate aminotransferase (376 aa).

Positions 1–21 (MQPRDLSAHEPYVPGRGTKEV) are disordered. K222 carries the N6-(pyridoxal phosphate)lysine modification.

Belongs to the class-II pyridoxal-phosphate-dependent aminotransferase family. Histidinol-phosphate aminotransferase subfamily. Requires pyridoxal 5'-phosphate as cofactor.

The enzyme catalyses L-histidinol phosphate + 2-oxoglutarate = 3-(imidazol-4-yl)-2-oxopropyl phosphate + L-glutamate. Its pathway is amino-acid biosynthesis; L-histidine biosynthesis; L-histidine from 5-phospho-alpha-D-ribose 1-diphosphate: step 7/9. The polypeptide is Histidinol-phosphate aminotransferase (Haloquadratum walsbyi (strain DSM 16790 / HBSQ001)).